Here is a 119-residue protein sequence, read N- to C-terminus: Large ribosomal subunit protein uL22 (119 aa).

The protein belongs to the universal ribosomal protein uL22 family. As to quaternary structure, part of the 50S ribosomal subunit.

In terms of biological role, this protein binds specifically to 23S rRNA; its binding is stimulated by other ribosomal proteins, e.g. L4, L17, and L20. It is important during the early stages of 50S assembly. It makes multiple contacts with different domains of the 23S rRNA in the assembled 50S subunit and ribosome. The globular domain of the protein is located near the polypeptide exit tunnel on the outside of the subunit, while an extended beta-hairpin is found that lines the wall of the exit tunnel in the center of the 70S ribosome. The polypeptide is Large ribosomal subunit protein uL22 (Bifidobacterium animalis subsp. lactis (strain AD011)).